The following is a 208-amino-acid chain: Thymidylate kinase (208 aa).

10–17 contacts ATP; the sequence is GLEGAGKT.

This sequence belongs to the thymidylate kinase family.

It catalyses the reaction dTMP + ATP = dTDP + ADP. Its function is as follows. Phosphorylation of dTMP to form dTDP in both de novo and salvage pathways of dTTP synthesis. In Actinobacillus pleuropneumoniae serotype 5b (strain L20), this protein is Thymidylate kinase.